Consider the following 288-residue polypeptide: Probable ketoamine kinase PM0587 (288 aa).

92 to 94 is an ATP binding site; that stretch reads EAL.

This sequence belongs to the fructosamine kinase family.

Ketoamine kinase that phosphorylates ketoamines on the third carbon of the sugar moiety to generate ketoamine 3-phosphate. This Pasteurella multocida (strain Pm70) protein is Probable ketoamine kinase PM0587.